The sequence spans 96 residues: DNA-directed RNA polymerase subunit Rpo11 (96 aa).

It belongs to the archaeal Rpo11/eukaryotic RPB11/RPC19 RNA polymerase subunit family. Part of the RNA polymerase complex.

It localises to the cytoplasm. It carries out the reaction RNA(n) + a ribonucleoside 5'-triphosphate = RNA(n+1) + diphosphate. DNA-dependent RNA polymerase (RNAP) catalyzes the transcription of DNA into RNA using the four ribonucleoside triphosphates as substrates. The chain is DNA-directed RNA polymerase subunit Rpo11 from Nanoarchaeum equitans (strain Kin4-M).